A 128-amino-acid chain; its full sequence is Glycine cleavage system H protein 2 (128 aa).

The region spanning 24 to 105 (TVTVGISDHA…PYSAWIFKVK (82 aa)) is the Lipoyl-binding domain. K65 is subject to N6-lipoyllysine.

This sequence belongs to the GcvH family. In terms of assembly, the glycine cleavage system is composed of four proteins: P, T, L and H. The cofactor is (R)-lipoate.

The glycine cleavage system catalyzes the degradation of glycine. The H protein shuttles the methylamine group of glycine from the P protein to the T protein. This Pseudomonas syringae pv. tomato (strain ATCC BAA-871 / DC3000) protein is Glycine cleavage system H protein 2.